The sequence spans 416 residues: LysM domain-containing GPI-anchored protein 1 (416 aa).

Residues Met1–Ala27 form the signal peptide. 4 disulfides stabilise this stretch: Cys34–Cys100, Cys40–Cys163, Cys98–Cys161, and Cys100–Cys163. Asn37 is a glycosylation site (N-linked (GlcNAc...) asparagine). The region spanning Thr110–Ile157 is the LysM 1 domain. N-linked (GlcNAc...) asparagine glycosylation occurs at Asn165. The LysM 2 domain occupies Leu176–Val219. Disulfide bonds link Cys224-Cys256 and Cys251-Cys279. Asn241 carries an N-linked (GlcNAc...) asparagine glycan. N-linked (GlcNAc...) asparagine glycosylation is found at Asn288, Asn299, and Asn310. The interval Asp356 to Leu376 is disordered. Residue Ala391 is the site of GPI-anchor amidated alanine attachment. A propeptide spans Ser392 to Ser416 (removed in mature form).

Interacts with peptidoglycans.

It is found in the cell membrane. It localises to the secreted. Required as a cell surface receptor for peptidoglycan (PGN) elicitor signaling leading to innate immunity. Plays an essential role in detecting PGNs and restricting bacterial growth (of Pseudomonas syringae pv. tomato DC3000 for example). In Arabidopsis thaliana (Mouse-ear cress), this protein is LysM domain-containing GPI-anchored protein 1 (LYM1).